A 270-amino-acid chain; its full sequence is Orotidine 5'-phosphate decarboxylase (270 aa).

Residues aspartate 39, 61–63 (KTH), 93–102 (DRKFADIGNT), tyrosine 221, and arginine 239 each bind substrate. The active-site Proton donor is lysine 95.

This sequence belongs to the OMP decarboxylase family.

It catalyses the reaction orotidine 5'-phosphate + H(+) = UMP + CO2. It functions in the pathway pyrimidine metabolism; UMP biosynthesis via de novo pathway; UMP from orotate: step 2/2. This Candida albicans (strain SC5314 / ATCC MYA-2876) (Yeast) protein is Orotidine 5'-phosphate decarboxylase (URA3).